Reading from the N-terminus, the 427-residue chain is MQVLESQKLSGHIRVSGAKNSSLVLMAAALLADRSVFLSNVPLLTDVEVMSKLLVSMGVELRRNKNQLEIMTSGLSLFSKDLSCEAFHSLRASFFCIGPLLARFGEAKIPLPGGCRIGARPIDEHIQALKALGARVEIQNDYVVAKAISPQKRLIGARIRFNCKSVGATETILMAATLSQGTTILENTAEEPEIQDLATMLNEMGAKIQGAGTSQITIEGVDRLKGCSYTVMPDRIEAGTFLVAAAITRSPLTISPVVPEHLEAVILKLQECGCLIEYSGNTLSVIPRKNLQAVDITTRPFPGFPTDLQAPFMALMTTVKGISKIQETVFENRMQHVGELQRMGATIVLEGNTAVVIGGNNLKATSVTGGDLRSCAAMVLASLAANGTSVIQGLEHLDRGYEDFAEKLNAVGANISRTHSVPLSSQE.

Residue 19–20 (KN) participates in phosphoenolpyruvate binding. Arg-91 contacts UDP-N-acetyl-alpha-D-glucosamine. The active-site Proton donor is the Cys-115. Cys-115 bears the 2-(S-cysteinyl)pyruvic acid O-phosphothioketal mark. UDP-N-acetyl-alpha-D-glucosamine-binding residues include Asp-307 and Val-329.

This sequence belongs to the EPSP synthase family. MurA subfamily.

It is found in the cytoplasm. It catalyses the reaction phosphoenolpyruvate + UDP-N-acetyl-alpha-D-glucosamine = UDP-N-acetyl-3-O-(1-carboxyvinyl)-alpha-D-glucosamine + phosphate. It participates in cell wall biogenesis; peptidoglycan biosynthesis. Functionally, cell wall formation. Adds enolpyruvyl to UDP-N-acetylglucosamine. This Prochlorococcus marinus (strain SARG / CCMP1375 / SS120) protein is UDP-N-acetylglucosamine 1-carboxyvinyltransferase 2.